The chain runs to 243 residues: Ice-binding protein K1-A (243 aa).

A signal peptide spans 1–20 (MFSSTYLLAIIALAVSSVFA).

This sequence belongs to the ice-binding protein family.

Its subcellular location is the secreted. Binds to the surface of ice crystals. Inhibits growth of the ice crystals. Has antifreeze activity for survival under snow cover. Has high thermal hysteresis (TH) activity, which is the ability to lower the freezing point of an aqueous solution below its melting point, and thus the freezing of the cell fluid can be prevented protecting the organism from ice damage. The TH activity of this protein is 2.0 degrees Celsius at 0.11 mM. This chain is Ice-binding protein K1-A, found in Typhula ishikariensis (Gray snow mold fungus).